The chain runs to 186 residues: Signal peptidase complex catalytic subunit SEC11 (186 aa).

Over 1-20 (MDALGLSKLRHLKPRQLLSQ) the chain is Cytoplasmic. A helical; Signal-anchor for type II membrane protein membrane pass occupies residues 21–41 (VLNFALILSTAFMLWKGLSVA). Over 42–186 (TDSPSPIVVV…MGLLVIVQRE (145 aa)) the chain is Lumenal. Catalysis depends on charge relay system residues Ser-55, His-102, and Asp-128. Residues 172-183 (ALLGIMGLLVIV) form a C-terminal short (CTS) helix region.

The protein belongs to the peptidase S26B family. In terms of assembly, component of the signal peptidase complex (SPC) composed of a catalytic subunit SEC11 and three accessory subunits SPC1, SPC2 and SPC3. The complex induces a local thinning of the ER membrane which is used to measure the length of the signal peptide (SP) h-region of protein substrates. This ensures the selectivity of the complex towards h-regions shorter than 18-20 amino acids. SPC associates with the translocon complex.

The protein resides in the endoplasmic reticulum membrane. The enzyme catalyses Cleavage of hydrophobic, N-terminal signal or leader sequences from secreted and periplasmic proteins.. In terms of biological role, catalytic component of the signal peptidase complex (SPC) which catalyzes the cleavage of N-terminal signal sequences from nascent proteins as they are translocated into the lumen of the endoplasmic reticulum. Specifically cleaves N-terminal signal peptides that contain a hydrophobic alpha-helix (h-region) shorter than 18-20 amino acids. This Tuber melanosporum (strain Mel28) (Perigord black truffle) protein is Signal peptidase complex catalytic subunit SEC11 (SEC11).